Reading from the N-terminus, the 384-residue chain is Galactokinase (384 aa).

Substrate is bound at residue 34–37 (EHTD). 123–129 (SSGLSSS) contacts ATP. Mg(2+) is bound by residues Ser129 and Glu161. Asp173 (proton acceptor) is an active-site residue. Tyr222 lines the substrate pocket.

The protein belongs to the GHMP kinase family. GalK subfamily.

The protein localises to the cytoplasm. It catalyses the reaction alpha-D-galactose + ATP = alpha-D-galactose 1-phosphate + ADP + H(+). It participates in carbohydrate metabolism; galactose metabolism. Catalyzes the transfer of the gamma-phosphate of ATP to D-galactose to form alpha-D-galactose-1-phosphate (Gal-1-P). The polypeptide is Galactokinase (Actinobacillus pleuropneumoniae serotype 3 (strain JL03)).